Here is a 130-residue protein sequence, read N- to C-terminus: Histone H2A type 1-C (130 aa).

Positions methionine 1–alanine 22 are disordered. Serine 2 bears the N-acetylserine mark. Serine 2 carries the phosphoserine; by RPS6KA5 modification. Residue arginine 4 is modified to Citrulline; alternate. A Symmetric dimethylarginine; by PRMT5; alternate modification is found at arginine 4. N6-(2-hydroxyisobutyryl)lysine; alternate occurs at positions 6 and 10. Lysine 6 carries the N6-acetyllysine; alternate modification. Positions glutamine 7–serine 19 are enriched in basic residues. An N6-(beta-hydroxybutyryl)lysine; alternate mark is found at lysine 10 and lysine 14. The residue at position 10 (lysine 10) is an N6-lactoyllysine; alternate. Lysine 10 carries the N6-succinyllysine; alternate modification. Lysine 14 is covalently cross-linked (Glycyl lysine isopeptide (Lys-Gly) (interchain with G-Cter in ubiquitin); alternate). A Glycyl lysine isopeptide (Lys-Gly) (interchain with G-Cter in ubiquitin) cross-link involves residue lysine 16. Lysine 37 carries the N6-(2-hydroxyisobutyryl)lysine; alternate modification. At lysine 37 the chain carries N6-(beta-hydroxybutyryl)lysine; alternate. The residue at position 37 (lysine 37) is an N6-crotonyllysine; alternate. Lysine 75 and lysine 76 each carry N6-(2-hydroxyisobutyryl)lysine. N6-(2-hydroxyisobutyryl)lysine; alternate is present on lysine 96. Lysine 96 is modified (N6-(beta-hydroxybutyryl)lysine; alternate). Lysine 96 is modified (N6-succinyllysine; alternate). Position 96 is an N6-glutaryllysine; alternate (lysine 96). N5-methylglutamine is present on glutamine 105. Residue lysine 119 is modified to N6-(2-hydroxyisobutyryl)lysine; alternate. Lysine 119 carries the N6-(beta-hydroxybutyryl)lysine; alternate modification. N6-crotonyllysine; alternate is present on residues lysine 119 and lysine 120. Residues lysine 119 and lysine 120 each carry the N6-glutaryllysine; alternate modification. A Glycyl lysine isopeptide (Lys-Gly) (interchain with G-Cter in ubiquitin); alternate cross-link involves residue lysine 120. Threonine 121 is subject to Phosphothreonine; by DCAF1. N6-crotonyllysine; alternate is present on lysine 126. Lysine 126 carries the N6-glutaryllysine; alternate modification.

Belongs to the histone H2A family. As to quaternary structure, the nucleosome is a histone octamer containing two molecules each of H2A, H2B, H3 and H4 assembled in one H3-H4 heterotetramer and two H2A-H2B heterodimers. The octamer wraps approximately 147 bp of DNA. Deiminated on Arg-4 in granulocytes upon calcium entry. In terms of processing, monoubiquitination of Lys-120 (H2AK119Ub) by RING1, TRIM37 and RNF2/RING2 complex gives a specific tag for epigenetic transcriptional repression and participates in X chromosome inactivation of female mammals. It is involved in the initiation of both imprinted and random X inactivation. Ubiquitinated H2A is enriched in inactive X chromosome chromatin. Ubiquitination of H2A functions downstream of methylation of 'Lys-27' of histone H3 (H3K27me). H2AK119Ub by RNF2/RING2 can also be induced by ultraviolet and may be involved in DNA repair. Monoubiquitination of Lys-120 (H2AK119Ub) by TRIM37 may promote transformation of cells in a number of breast cancers. Following DNA double-strand breaks (DSBs), it is ubiquitinated through 'Lys-63' linkage of ubiquitin moieties by the E2 ligase UBE2N and the E3 ligases RNF8 and RNF168, leading to the recruitment of repair proteins to sites of DNA damage. Ubiquitination at Lys-14 and Lys-16 (H2AK13Ub and H2AK15Ub, respectively) in response to DNA damage is initiated by RNF168 that mediates monoubiquitination at these 2 sites, and 'Lys-63'-linked ubiquitin are then conjugated to monoubiquitin; RNF8 is able to extend 'Lys-63'-linked ubiquitin chains in vitro. Deubiquitinated by USP51 at Lys-14 and Lys-16 (H2AK13Ub and H2AK15Ub, respectively) after damaged DNA is repaired. H2AK119Ub and ionizing radiation-induced 'Lys-63'-linked ubiquitination (H2AK13Ub and H2AK15Ub) are distinct events. Post-translationally, phosphorylation on Ser-2 (H2AS1ph) is enhanced during mitosis. Phosphorylation on Ser-2 by RPS6KA5/MSK1 directly represses transcription. Acetylation of H3 inhibits Ser-2 phosphorylation by RPS6KA5/MSK1. Phosphorylation at Thr-121 (H2AT120ph) by DCAF1 is present in the regulatory region of many tumor suppresor genes and down-regulates their transcription. Glutamine methylation at Gln-105 (H2AQ104me) by FBL is specifically dedicated to polymerase I. It is present at 35S ribosomal DNA locus and impairs binding of the FACT complex. In terms of processing, symmetric dimethylation on Arg-4 by the PRDM1/PRMT5 complex may play a crucial role in the germ-cell lineage. Post-translationally, crotonylation (Kcr) is specifically present in male germ cells and marks testis-specific genes in post-meiotic cells, including X-linked genes that escape sex chromosome inactivation in haploid cells. Crotonylation marks active promoters and enhancers and confers resistance to transcriptional repressors. It is also associated with post-meiotically activated genes on autosomes. Lactylated in macrophages by EP300/P300 by using lactoyl-CoA directly derived from endogenous or exogenous lactate, leading to stimulates gene transcription.

The protein localises to the nucleus. It is found in the chromosome. Core component of nucleosome. Nucleosomes wrap and compact DNA into chromatin, limiting DNA accessibility to the cellular machineries which require DNA as a template. Histones thereby play a central role in transcription regulation, DNA repair, DNA replication and chromosomal stability. DNA accessibility is regulated via a complex set of post-translational modifications of histones, also called histone code, and nucleosome remodeling. The protein is Histone H2A type 1-C of Homo sapiens (Human).